Reading from the N-terminus, the 30-residue chain is Ribonuclease pancreatic (30 aa).

Basic and acidic residues predominate over residues 1 to 13 (KETAAAKFERQHM). The disordered stretch occupies residues 1–21 (KETAAAKFERQHMDPAPAAAX). Positions 7 and 10 each coordinate substrate. Histidine 12 serves as the catalytic Proton acceptor.

Belongs to the pancreatic ribonuclease family. As to quaternary structure, monomer. Interacts with and forms tight 1:1 complexes with RNH1. Dimerization of two such complexes may occur. Interaction with RNH1 inhibits this protein. In terms of tissue distribution, pancreas.

It is found in the secreted. The catalysed reaction is an [RNA] containing cytidine + H2O = an [RNA]-3'-cytidine-3'-phosphate + a 5'-hydroxy-ribonucleotide-3'-[RNA].. It carries out the reaction an [RNA] containing uridine + H2O = an [RNA]-3'-uridine-3'-phosphate + a 5'-hydroxy-ribonucleotide-3'-[RNA].. Functionally, endonuclease that catalyzes the cleavage of RNA on the 3' side of pyrimidine nucleotides. Acts on single-stranded and double-stranded RNA. This Odocoileus virginianus virginianus (Virginia white-tailed deer) protein is Ribonuclease pancreatic (RNASE1).